We begin with the raw amino-acid sequence, 157 residues long: Ribonuclease H (157 aa).

The 146-residue stretch at 1-146 (MPELFAYTDG…ADALAREGMA (146 aa)) folds into the RNase H type-1 domain. Residues D9, E52, D74, and D138 each coordinate Mg(2+).

It belongs to the RNase H family. Monomer. Mg(2+) is required as a cofactor.

The protein localises to the cytoplasm. It carries out the reaction Endonucleolytic cleavage to 5'-phosphomonoester.. Endonuclease that specifically degrades the RNA of RNA-DNA hybrids. The protein is Ribonuclease H of Dinoroseobacter shibae (strain DSM 16493 / NCIMB 14021 / DFL 12).